Consider the following 118-residue polypeptide: UPF0145 protein PTO0347 (118 aa).

The protein belongs to the UPF0145 family.

The sequence is that of UPF0145 protein PTO0347 from Picrophilus torridus (strain ATCC 700027 / DSM 9790 / JCM 10055 / NBRC 100828 / KAW 2/3).